A 376-amino-acid polypeptide reads, in one-letter code: tRNA(Met) cytidine acetate ligase (376 aa).

Residues 7 to 20 (IAEYNPFHNGHYYQ), G102, N160, and R181 each bind ATP.

The protein belongs to the TmcAL family.

It is found in the cytoplasm. The catalysed reaction is cytidine(34) in elongator tRNA(Met) + acetate + ATP = N(4)-acetylcytidine(34) in elongator tRNA(Met) + AMP + diphosphate. In terms of biological role, catalyzes the formation of N(4)-acetylcytidine (ac(4)C) at the wobble position of elongator tRNA(Met), using acetate and ATP as substrates. First activates an acetate ion to form acetyladenylate (Ac-AMP) and then transfers the acetyl group to tRNA to form ac(4)C34. In Exiguobacterium sp. (strain ATCC BAA-1283 / AT1b), this protein is tRNA(Met) cytidine acetate ligase.